We begin with the raw amino-acid sequence, 180 residues long: Putative pre-16S rRNA nuclease (180 aa).

Over residues 1–12 the composition is skewed to basic and acidic residues; it reads MDAQERSERPDP. The interval 1-23 is disordered; that stretch reads MDAQERSERPDPATDPGRGRRLG.

Belongs to the YqgF nuclease family.

It is found in the cytoplasm. In terms of biological role, could be a nuclease involved in processing of the 5'-end of pre-16S rRNA. This Nocardia farcinica (strain IFM 10152) protein is Putative pre-16S rRNA nuclease.